The following is a 380-amino-acid chain: MTNYPITYRLIKKEKHTGARLGEIITPHGTFPTPMFMPVGTQATVKTQSPEELKEIGSGIILSNTYHLWLRPGDELIARAGGLHKFMNWDQAILTDSGGFQVYSLADSRNITEEGVTFKNHLNGSKMFLSPEKAISIQNNLGSDIMMSFDECPQFYQPYDYVKKSIERTSRWAERGLKAHRRPHDQGLFGIVQGAGFEDLRRQSAADLVSMDFPGYSIGGLAVGESHAEMNAVLDFTTPLLPENKPRYLMGVGAPDSLIDGVIRGVDMFDCVLPTRIARNGTCMTSEGRLVVKNAKFAEDFTPLDHHCDCYTCQHYTRAYLRHLLKADETFGMRLTSYHNLYFLVNLMKQVRQAILDDNLLEFRQDFLERYGYNSSSRNF.

Catalysis depends on Asp96, which acts as the Proton acceptor. Substrate is bound by residues 96-100 (DSGGF), Asp150, Gln193, and Gly220. Positions 251–257 (GVGAPDS) are RNA binding. Residue Asp270 is the Nucleophile of the active site. An RNA binding; important for wobble base 34 recognition region spans residues 275–279 (TRIAR). Cys308, Cys310, Cys313, and His339 together coordinate Zn(2+).

Belongs to the queuine tRNA-ribosyltransferase family. As to quaternary structure, homodimer. Within each dimer, one monomer is responsible for RNA recognition and catalysis, while the other monomer binds to the replacement base PreQ1. Zn(2+) is required as a cofactor.

It carries out the reaction 7-aminomethyl-7-carbaguanine + guanosine(34) in tRNA = 7-aminomethyl-7-carbaguanosine(34) in tRNA + guanine. It participates in tRNA modification; tRNA-queuosine biosynthesis. In terms of biological role, catalyzes the base-exchange of a guanine (G) residue with the queuine precursor 7-aminomethyl-7-deazaguanine (PreQ1) at position 34 (anticodon wobble position) in tRNAs with GU(N) anticodons (tRNA-Asp, -Asn, -His and -Tyr). Catalysis occurs through a double-displacement mechanism. The nucleophile active site attacks the C1' of nucleotide 34 to detach the guanine base from the RNA, forming a covalent enzyme-RNA intermediate. The proton acceptor active site deprotonates the incoming PreQ1, allowing a nucleophilic attack on the C1' of the ribose to form the product. After dissociation, two additional enzymatic reactions on the tRNA convert PreQ1 to queuine (Q), resulting in the hypermodified nucleoside queuosine (7-(((4,5-cis-dihydroxy-2-cyclopenten-1-yl)amino)methyl)-7-deazaguanosine). The polypeptide is Queuine tRNA-ribosyltransferase (Streptococcus equi subsp. equi (strain 4047)).